Consider the following 373-residue polypeptide: Cobalt-precorrin-5B C(1)-methyltransferase (373 aa).

Belongs to the CbiD family.

The catalysed reaction is Co-precorrin-5B + S-adenosyl-L-methionine = Co-precorrin-6A + S-adenosyl-L-homocysteine. It participates in cofactor biosynthesis; adenosylcobalamin biosynthesis; cob(II)yrinate a,c-diamide from sirohydrochlorin (anaerobic route): step 6/10. Catalyzes the methylation of C-1 in cobalt-precorrin-5B to form cobalt-precorrin-6A. The polypeptide is Cobalt-precorrin-5B C(1)-methyltransferase (Halorhodospira halophila (strain DSM 244 / SL1) (Ectothiorhodospira halophila (strain DSM 244 / SL1))).